The following is an 874-amino-acid chain: MEQSLVKALLKNTNNPRLAWRIFKRIFSSPSEESHGISLDATPTIARILVRAKMHEEIQELHNLILSSSIQKTKLSSLLSVVSIFAKSNHIDKAFPQFQLVRSRFPENKPSVYLYNLLLESCIKERRVEFVSWLYKDMVLCGIAPQTYTFNLLIRALCDSSCVDAARELFDEMPEKGCKPNEFTFGILVRGYCKAGLTDKGLELLNAMESFGVLPNKVIYNTIVSSFCREGRNDDSEKMVEKMREEGLVPDIVTFNSRISALCKEGKVLDASRIFSDMELDEYLGLPRPNSITYNLMLKGFCKVGLLEDAKTLFESIRENDDLASLQSYNIWLQGLVRHGKFIEAETVLKQMTDKGIGPSIYSYNILMDGLCKLGMLSDAKTIVGLMKRNGVCPDAVTYGCLLHGYCSVGKVDAAKSLLQEMMRNNCLPNAYTCNILLHSLWKMGRISEAEELLRKMNEKGYGLDTVTCNIIVDGLCGSGELDKAIEIVKGMRVHGSAALGNLGNSYIGLVDDSLIENNCLPDLITYSTLLNGLCKAGRFAEAKNLFAEMMGEKLQPDSVAYNIFIHHFCKQGKISSAFRVLKDMEKKGCHKSLETYNSLILGLGIKNQIFEIHGLMDEMKEKGISPNICTYNTAIQYLCEGEKVEDATNLLDEMMQKNIAPNVFSFKYLIEAFCKVPDFDMAQEVFETAVSICGQKEGLYSLMFNELLAAGQLLKATELLEAVLDRGFELGTFLYKDLVESLCKKDELEVASGILHKMIDRGYGFDPAALMPVIDGLGKMGNKKEANSFADKMMEMASVGEVANKVDPNARDIHQKKHNKNGGNNWQNILHRDDGSGIALRSLSRVKKGWGQGDISSFQPPRVDYLDYWEDDG.

19 PPR repeats span residues Ser-111–Pro-145, Gln-146–Pro-180, Asn-181–Pro-215, Asn-216–Pro-250, Asp-251–Gly-285, Asn-290–Asn-320, Ser-325–Pro-359, Ser-360–Pro-394, Asp-395–Pro-429, Asn-430–Leu-464, Asp-465–Ala-499, Asp-523–Pro-557, Asp-558–Lys-592, Ser-593–Pro-627, Asn-628–Pro-662, Asn-663–Ile-693, Lys-697–Leu-731, Gly-732–Phe-766, and Asp-767–Met-797.

This sequence belongs to the PPR family. P subfamily.

The polypeptide is Pentatricopeptide repeat-containing protein At2g17140 (Arabidopsis thaliana (Mouse-ear cress)).